We begin with the raw amino-acid sequence, 370 residues long: MMMSSSQTPVRIAFVFLVILAATDAHSDHRTPPPACGGAAVGGECHSVARALRLKLIAIPAILAASVAGVCLPLFARSVPALRPDGGLFAVVKAFASGVILGTGYMHVLPDSFNDLTSPCLPRKPWSEFPFAAFVAMLAAVFTLMVDSLMLTFHTRGSKGRASSAVAHHGDHGHCHAHALGQADVAALSTTEAADQGSGDVEAGNTTKAQLLRNRVIVQVLEMGIVVHSVVIGLGMGASQNVCTIRPLVAALCFHQMFEGMGLGGCILQAGYGGRTRSALVFFFSTTTPFGIALGLALTRVYSDSSPTALVVVGLLNAASAGLLHYMALVELLAADFMGPKLQGNVRLQLAASLAILLGAGGMSVMAKWA.

Positions Met1 to Ala25 are cleaved as a signal peptide. Residues His26–Lys55 lie on the Extracellular side of the membrane. The chain crosses the membrane as a helical span at residues Leu56–Ala76. Residues Arg77–Asp85 lie on the Cytoplasmic side of the membrane. A helical transmembrane segment spans residues Gly86–Met106. At His107 to Pro130 the chain is on the extracellular side. A helical transmembrane segment spans residues Phe131–Leu151. Residues Thr152–Arg215 lie on the Cytoplasmic side of the membrane. Residues Val216–Met236 form a helical membrane-spanning segment. The Extracellular portion of the chain corresponds to Gly237 to Pro247. The helical transmembrane segment at Leu248–Leu268 threads the bilayer. Residues Gln269–Ser278 are Cytoplasmic-facing. Residues Ala279–Thr299 form a helical membrane-spanning segment. Residues Arg300–Ala309 lie on the Extracellular side of the membrane. The helical transmembrane segment at Leu310–Val330 threads the bilayer. Residues Glu331–Gln349 are Cytoplasmic-facing. The chain crosses the membrane as a helical span at residues Leu350–Ala370.

The protein belongs to the ZIP transporter (TC 2.A.5) family.

It localises to the cell membrane. Functionally, iron transporter that may play a role in the uptake of iron from the rhizosphere across the plasma membrane in the root epidermal layer. This chain is Fe(2+) transport protein 2 (IRT2), found in Oryza sativa subsp. japonica (Rice).